Here is a 627-residue protein sequence, read N- to C-terminus: Altered inheritance of mitochondria protein 9, mitochondrial (627 aa).

A mitochondrion-targeting transit peptide spans 1-43 (MIRYTVAGHSRRCVVGASKRVGAIKCITVAATKRFISNKSNEV).

Belongs to the AIM9 family.

The protein resides in the mitochondrion. The polypeptide is Altered inheritance of mitochondria protein 9, mitochondrial (AIM9) (Saccharomyces cerevisiae (strain JAY291) (Baker's yeast)).